Here is a 241-residue protein sequence, read N- to C-terminus: Probable transcriptional regulatory protein str0195 (241 aa).

Belongs to the TACO1 family. YeeN subfamily.

It localises to the cytoplasm. The polypeptide is Probable transcriptional regulatory protein str0195 (Streptococcus thermophilus (strain CNRZ 1066)).